Reading from the N-terminus, the 333-residue chain is tRNA uridine(34) hydroxylase (333 aa).

Positions 123–217 constitute a Rhodanese domain; the sequence is SDPEVILVDT…YLEEIKQEES (95 aa). The active-site Cysteine persulfide intermediate is the cysteine 177.

Belongs to the TrhO family.

It carries out the reaction uridine(34) in tRNA + AH2 + O2 = 5-hydroxyuridine(34) in tRNA + A + H2O. In terms of biological role, catalyzes oxygen-dependent 5-hydroxyuridine (ho5U) modification at position 34 in tRNAs. The chain is tRNA uridine(34) hydroxylase from Shewanella sp. (strain MR-7).